The chain runs to 349 residues: Insulin gene enhancer protein isl-1 (349 aa).

LIM zinc-binding domains follow at residues 17–70 and 79–133; these read CVGC…CKRD and CAKC…RADH. Positions 181-240 form a DNA-binding region, homeobox; the sequence is TTRVRTVLNEKQLHTLRTCYNANPRPDALMKEQLVEMTGLSPRVIRVWFQNKRCKDKKRS. Residues 312 to 349 form a disordered region; the sequence is VNFSEGGPGSNSTGSEVASMSSQLPDTPNSMVASPIEA. Over residues 321-343 the composition is skewed to polar residues; the sequence is SNSTGSEVASMSSQLPDTPNSMV.

Its subcellular location is the nucleus. Its function is as follows. DNA-binding transcriptional activator. Recognizes and binds to the consensus octamer binding site 5'-ATAATTAA-3' in promoter of target genes. Plays a fundamental role in the gene regulatory network essential for retinal ganglion cell (RGC) differentiation. May be involved in subtype specialization of primary motoneurons. May bind to insulin gene enhancer sequences. Essential for heart development. The chain is Insulin gene enhancer protein isl-1 (isl1) from Danio rerio (Zebrafish).